Consider the following 414-residue polypeptide: CinA-like protein (414 aa).

The protein belongs to the CinA family.

This Koribacter versatilis (strain Ellin345) protein is CinA-like protein.